The following is an 86-amino-acid chain: Mu-theraphotoxin-Hhn1b 1 (86 aa).

Positions 1–21 are cleaved as a signal peptide; sequence MKASMFLALAGLALLFVVCYA. A propeptide spanning residues 22 to 49 is cleaved from the precursor; sequence SESEEKEFSNELLSSVLAVDDNSKGEER. Disulfide bonds link cysteine 51–cysteine 66, cysteine 58–cysteine 73, and cysteine 65–cysteine 80. Isoleucine 84 carries the post-translational modification Isoleucine amide.

This sequence belongs to the neurotoxin 10 (Hwtx-1) family. 22 (Htx-4) subfamily. As to quaternary structure, monomer. As to expression, expressed by the venom gland.

The protein resides in the secreted. Its function is as follows. Neurotoxin that selectively inhibits neuronal tetrodotoxin-sensitive voltage-gated sodium channels (Nav) (IC(50)=44.6 nM). It is active on Nav1.2/SCN2A (IC(50)=22.4 nM), Nav1.6/SCN8A (IC(50)=50.1 nM) and Nav1.7/SCN9A (IC(50)=48.9 nM). It shows low affinity for lipid bilayers. This is Mu-theraphotoxin-Hhn1b 1 from Cyriopagopus hainanus (Chinese bird spider).